Consider the following 238-residue polypeptide: Probable transcriptional regulatory protein SSU05_0402 (238 aa).

The protein belongs to the TACO1 family. YeeN subfamily.

Its subcellular location is the cytoplasm. This is Probable transcriptional regulatory protein SSU05_0402 from Streptococcus suis (strain 05ZYH33).